Reading from the N-terminus, the 464-residue chain is NADH dehydrogenase [ubiquinone] flavoprotein 1, mitochondrial (464 aa).

Residues 1-20 (MLATRRLLGWSLPARVSVRF) constitute a mitochondrion transit peptide. Lys81 is modified (N6-acetyllysine; alternate). The residue at position 81 (Lys81) is an N6-succinyllysine; alternate. 87 to 96 (GRGGAGFPTG) serves as a coordination point for NADH. Lys104 carries the post-translational modification N6-acetyllysine. Residue 199 to 247 (RGAGAYICGEETALIESIEGKQGKPRLKPPFPADVGVFGCPTTVANVET) participates in FMN binding. Omega-N-methylarginine is present on Arg257. Residue Lys375 is modified to N6-acetyllysine. [4Fe-4S] cluster is bound by residues Cys379, Cys382, Cys385, and Cys425.

It belongs to the complex I 51 kDa subunit family. In terms of assembly, core subunit of respiratory chain NADH dehydrogenase (Complex I) which is composed of 45 different subunits. This is a component of the flavoprotein-sulfur (FP) fragment of the enzyme. Interacts with RAB5IF. It depends on FMN as a cofactor. [4Fe-4S] cluster serves as cofactor.

It localises to the mitochondrion inner membrane. It catalyses the reaction a ubiquinone + NADH + 5 H(+)(in) = a ubiquinol + NAD(+) + 4 H(+)(out). In terms of biological role, core subunit of the mitochondrial membrane respiratory chain NADH dehydrogenase (Complex I) which catalyzes electron transfer from NADH through the respiratory chain, using ubiquinone as an electron acceptor. Part of the peripheral arm of the enzyme, where the electrons from NADH are accepted by flavin mononucleotide (FMN) and then passed along a chain of iron-sulfur clusters by electron tunnelling to the final acceptor ubiquinone. Contains FMN, which is the initial electron acceptor as well as one iron-sulfur cluster. This is NADH dehydrogenase [ubiquinone] flavoprotein 1, mitochondrial from Pan troglodytes (Chimpanzee).